We begin with the raw amino-acid sequence, 248 residues long: 4-hydroxy-tetrahydrodipicolinate reductase (248 aa).

NAD(+) is bound by residues 74–76 (GTT) and 99–102 (SANF). Residue H134 is the Proton donor/acceptor of the active site. Residue H135 coordinates (S)-2,3,4,5-tetrahydrodipicolinate. K138 serves as the catalytic Proton donor. (S)-2,3,4,5-tetrahydrodipicolinate is bound at residue 144 to 145 (GT).

This sequence belongs to the DapB family.

The protein resides in the cytoplasm. It catalyses the reaction (S)-2,3,4,5-tetrahydrodipicolinate + NAD(+) + H2O = (2S,4S)-4-hydroxy-2,3,4,5-tetrahydrodipicolinate + NADH + H(+). The catalysed reaction is (S)-2,3,4,5-tetrahydrodipicolinate + NADP(+) + H2O = (2S,4S)-4-hydroxy-2,3,4,5-tetrahydrodipicolinate + NADPH + H(+). Its pathway is amino-acid biosynthesis; L-lysine biosynthesis via DAP pathway; (S)-tetrahydrodipicolinate from L-aspartate: step 4/4. In terms of biological role, catalyzes the conversion of 4-hydroxy-tetrahydrodipicolinate (HTPA) to tetrahydrodipicolinate. This Chlorobium phaeobacteroides (strain DSM 266 / SMG 266 / 2430) protein is 4-hydroxy-tetrahydrodipicolinate reductase.